The chain runs to 227 residues: Cytochrome c oxidase subunit 2 (227 aa).

Residues methionine 1–serine 14 lie on the Mitochondrial intermembrane side of the membrane. The chain crosses the membrane as a helical span at residues proline 15–methionine 45. Topologically, residues leucine 46–glutamine 59 are mitochondrial matrix. The chain crosses the membrane as a helical span at residues glutamate 60 to methionine 87. At aspartate 88–isoleucine 227 the chain is on the mitochondrial intermembrane side. Histidine 161, cysteine 196, glutamate 198, cysteine 200, histidine 204, and methionine 207 together coordinate Cu cation. Glutamate 198 is a binding site for Mg(2+).

The protein belongs to the cytochrome c oxidase subunit 2 family. As to quaternary structure, component of the cytochrome c oxidase (complex IV, CIV), a multisubunit enzyme composed of 14 subunits. The complex is composed of a catalytic core of 3 subunits MT-CO1, MT-CO2 and MT-CO3, encoded in the mitochondrial DNA, and 11 supernumerary subunits COX4I, COX5A, COX5B, COX6A, COX6B, COX6C, COX7A, COX7B, COX7C, COX8 and NDUFA4, which are encoded in the nuclear genome. The complex exists as a monomer or a dimer and forms supercomplexes (SCs) in the inner mitochondrial membrane with NADH-ubiquinone oxidoreductase (complex I, CI) and ubiquinol-cytochrome c oxidoreductase (cytochrome b-c1 complex, complex III, CIII), resulting in different assemblies (supercomplex SCI(1)III(2)IV(1) and megacomplex MCI(2)III(2)IV(2)). Found in a complex with TMEM177, COA6, COX18, COX20, SCO1 and SCO2. Interacts with TMEM177 in a COX20-dependent manner. Interacts with COX20. Interacts with COX16. Cu cation is required as a cofactor.

It localises to the mitochondrion inner membrane. The catalysed reaction is 4 Fe(II)-[cytochrome c] + O2 + 8 H(+)(in) = 4 Fe(III)-[cytochrome c] + 2 H2O + 4 H(+)(out). Functionally, component of the cytochrome c oxidase, the last enzyme in the mitochondrial electron transport chain which drives oxidative phosphorylation. The respiratory chain contains 3 multisubunit complexes succinate dehydrogenase (complex II, CII), ubiquinol-cytochrome c oxidoreductase (cytochrome b-c1 complex, complex III, CIII) and cytochrome c oxidase (complex IV, CIV), that cooperate to transfer electrons derived from NADH and succinate to molecular oxygen, creating an electrochemical gradient over the inner membrane that drives transmembrane transport and the ATP synthase. Cytochrome c oxidase is the component of the respiratory chain that catalyzes the reduction of oxygen to water. Electrons originating from reduced cytochrome c in the intermembrane space (IMS) are transferred via the dinuclear copper A center (CU(A)) of subunit 2 and heme A of subunit 1 to the active site in subunit 1, a binuclear center (BNC) formed by heme A3 and copper B (CU(B)). The BNC reduces molecular oxygen to 2 water molecules using 4 electrons from cytochrome c in the IMS and 4 protons from the mitochondrial matrix. This is Cytochrome c oxidase subunit 2 (MT-CO2) from Oryctolagus cuniculus (Rabbit).